The chain runs to 100 residues: Small ribosomal subunit protein uS14 (100 aa).

This sequence belongs to the universal ribosomal protein uS14 family. As to quaternary structure, part of the 30S ribosomal subunit. Contacts proteins S3 and S10.

Binds 16S rRNA, required for the assembly of 30S particles and may also be responsible for determining the conformation of the 16S rRNA at the A site. The polypeptide is Small ribosomal subunit protein uS14 (Synechocystis sp. (strain ATCC 27184 / PCC 6803 / Kazusa)).